The primary structure comprises 261 residues: Large ribosomal subunit protein uL10m (261 aa).

Residues 1 to 28 constitute a mitochondrion transit peptide; sequence MAAAVAGMLRGGLLPQAGRLPTLQTVRY. Residues 242–261 are disordered; it reads EKDSVMSANGKPDPDTVPDS.

It belongs to the universal ribosomal protein uL10 family. Component of the mitochondrial large ribosomal subunit (mt-LSU). Mature mammalian 55S mitochondrial ribosomes consist of a small (28S) and a large (39S) subunit. The 28S small subunit contains a 12S ribosomal RNA (12S mt-rRNA) and 30 different proteins. The 39S large subunit contains a 16S rRNA (16S mt-rRNA), a copy of mitochondrial valine transfer RNA (mt-tRNA(Val)), which plays an integral structural role, and 52 different proteins. uL10m contributes a single cysteine residue to a zinc-binding site with mL66.

It localises to the mitochondrion. The polypeptide is Large ribosomal subunit protein uL10m (MRPL10) (Homo sapiens (Human)).